The following is a 531-amino-acid chain: CCA tRNA nucleotidyltransferase, mitochondrial (531 aa).

Belongs to the tRNA nucleotidyltransferase/poly(A) polymerase family.

Its subcellular location is the mitochondrion. It is found in the cytoplasm. The protein localises to the nucleus. The catalysed reaction is a tRNA precursor + 2 CTP + ATP = a tRNA with a 3' CCA end + 3 diphosphate. Nucleotidyltransferase that catalyzes the addition and repair of the essential 3'-terminal CCA sequence in tRNAs, which is necessary for the attachment of amino acids to the 3' terminus of tRNA molecules, using CTP and ATP as substrates. tRNA 3'-terminal CCA addition is required both for tRNA processing and repair. Also involved in tRNA surveillance by mediating tandem CCA addition to generate a CCACCA at the 3' terminus of unstable tRNAs. While stable tRNAs receive only 3'-terminal CCA, unstable tRNAs are marked with CCACCA and rapidly degraded. The structural flexibility of RNA controls the choice between CCA versus CCACCA addition: following the first CCA addition cycle, nucleotide-binding to the active site triggers a clockwise screw motion, producing torque on the RNA. This ejects stable RNAs, whereas unstable RNAs are refolded while bound to the enzyme and subjected to a second CCA catalytic cycle. This Candida glabrata (strain ATCC 2001 / BCRC 20586 / JCM 3761 / NBRC 0622 / NRRL Y-65 / CBS 138) (Yeast) protein is CCA tRNA nucleotidyltransferase, mitochondrial (CCA1).